The sequence spans 1256 residues: Bifunctional autolysin (1256 aa).

The N-terminal stretch at 1-29 (MAKKFNYKLPSMVALTLVGSAVTAHQVQA) is a signal peptide. A compositionally biased stretch (polar residues) spans 103-138 (GDTRANQSATTNNTQPVAKSTSTTAPKTNTNVTNAG). Disordered regions lie at residues 103–151 (GDTR…NSEN), 172–219 (KTAA…KYKP), and 419–440 (TQSTTTPTTPSKPTTPSKPSTG). 2 stretches are compositionally biased toward low complexity: residues 172–196 (KTAAPKAATTSAPKAKTEATPKVTT) and 421–439 (STTTPTTPSKPTTPSKPST). Residues 199 to 775 (ASAQPRSVAA…AVAQPKTAVK (577 aa)) are N-acetylmuramoyl-L-alanine amidase. 7 GW domains span residues 443–517 (TVAA…YNTA), 519–593 (SPVN…DTAK), 612–686 (TVSS…YNNA), 688–762 (SPVN…VPAA), 784–859 (TTQT…VQNL), 861–936 (KEVK…APTA), and 943–1017 (AAKD…KELI). Residues 776-1256 (AYTVTKPQTT…GKYFDIPQYK (481 aa)) are endo-beta-N-acetylglucosaminidase.

It in the N-terminal section; belongs to the N-acetylmuramoyl-L-alanine amidase 2 family. The protein in the C-terminal section; belongs to the glycosyl hydrolase 73 family. In terms of assembly, oligomer; forms a ring structure at the cell surface which is important for efficient partitioning of daughter cells after cell division. In terms of processing, undergoes proteolytic processing to generate the two extracellular lytic enzymes, probably at the septal region on the cell surface.

The protein resides in the secreted. It catalyses the reaction Hydrolyzes the link between N-acetylmuramoyl residues and L-amino acid residues in certain cell-wall glycopeptides.. It carries out the reaction an N(4)-(oligosaccharide-(1-&gt;3)-[oligosaccharide-(1-&gt;6)]-beta-D-Man-(1-&gt;4)-beta-D-GlcNAc-(1-&gt;4)-alpha-D-GlcNAc)-L-asparaginyl-[protein] + H2O = an oligosaccharide-(1-&gt;3)-[oligosaccharide-(1-&gt;6)]-beta-D-Man-(1-&gt;4)-D-GlcNAc + N(4)-(N-acetyl-beta-D-glucosaminyl)-L-asparaginyl-[protein]. In terms of biological role, endohydrolysis of the di-N-acetylchitobiosyl unit in high-mannose glycopeptides and glycoproteins containing the -[(Man)5(GlcNAc)2]-Asn structure. One N-acetyl-D-glucosamine residue remains attached to the protein; the rest of the oligosaccharide is released intact. Cleaves the peptidoglycan connecting the daughter cells at the end of the cell division cycle, resulting in the separation of the two newly divided cells. Acts as an autolysin in penicillin-induced lysis. The protein is Bifunctional autolysin (atl) of Staphylococcus aureus (strain COL).